The sequence spans 1221 residues: RNA exonuclease 1 homolog (1221 aa).

Gly residues predominate over residues 37–46; the sequence is RGSGAPGDGG. The tract at residues 37-75 is disordered; that stretch reads RGSGAPGDGGEAPPAAGLGYDPYNPELPKPPAQRENGTL. Residues 86-115 adopt a coiled-coil conformation; it reads LELELVNQAIEAVRSEVELEQRRYRELLET. The tract at residues 116–598 is disordered; sequence TREHRSAEAP…STSSAGADVD (483 aa). At Arg-191 the chain carries Omega-N-methylarginine. Phosphoserine occurs at positions 287, 289, and 358. Residues 357-369 are compositionally biased toward low complexity; that stretch reads ASPAQVQSSQDGG. Over residues 393–417 the composition is skewed to basic and acidic residues; that stretch reads AQGKDKTKDKGRGRPVEKPRADKKG. Phosphoserine occurs at positions 459, 499, and 526. The segment covering 492–501 has biased composition (basic and acidic residues); it reads LVERKARSLD. Residues 498 to 577 form an interaction with ELOA region; sequence RSLDEGASQD…KRLKASPPPS (80 aa). The segment covering 580-593 has biased composition (low complexity); sequence PSSSSSSSSSTSSA. A Phosphoserine modification is found at Ser-610. 2 disordered regions span residues 619 to 692 and 735 to 775; these read IFNE…TAQE and HIPN…TRTL. Over residues 627–648 the composition is skewed to basic and acidic residues; the sequence is KTEDRGRLARQPPKEEKSEEKG. Position 914 is a phosphoserine (Ser-914). The region spanning 1060 to 1209 is the Exonuclease domain; sequence IYALDCEMSY…EDAGACMHLV (150 aa).

The protein belongs to the REXO1/REXO3 family. As to quaternary structure, interacts with TCEA2 and ELOA. Ubiquitously expressed.

Its subcellular location is the nucleus. Its function is as follows. Seems to have no detectable effect on transcription elongation in vitro. The polypeptide is RNA exonuclease 1 homolog (REXO1) (Homo sapiens (Human)).